A 664-amino-acid polypeptide reads, in one-letter code: Macrolide export ATP-binding/permease protein MacB (664 aa).

The region spanning 8 to 245 is the ABC transporter domain; sequence LELVDVHRTY…AGPSVPLTLD (238 aa). ATP is bound at residue 44 to 51; sequence GSSGSGKS. Transmembrane regions (helical) follow at residues 283 to 303, 543 to 563, 602 to 622, and 627 to 647; these read LLSV…MALG, GAIA…IMLV, IIGI…AGWA, and IVSI…FGLW.

Belongs to the ABC transporter superfamily. Macrolide exporter (TC 3.A.1.122) family. As to quaternary structure, homodimer.

Its subcellular location is the cell inner membrane. Functionally, non-canonical ABC transporter that contains transmembrane domains (TMD), which form a pore in the inner membrane, and an ATP-binding domain (NBD), which is responsible for energy generation. Confers resistance against macrolides. The polypeptide is Macrolide export ATP-binding/permease protein MacB (Chlorobium luteolum (strain DSM 273 / BCRC 81028 / 2530) (Pelodictyon luteolum)).